The following is a 737-amino-acid chain: Glycogen [starch] synthase, muscle (737 aa).

Ser8 is modified (phosphoserine; by AMPK and PKA). Ser11 is subject to Phosphoserine. Lys39 serves as a coordination point for UDP. His205 and Arg211 together coordinate UDP-alpha-D-glucose. Positions 291, 292, 294, 297, and 301 each coordinate alpha-D-glucose 6-phosphate. Arg331 lines the UDP pocket. Residue Arg331 coordinates UDP-alpha-D-glucose. Ser412 is modified (phosphoserine). His501 lines the alpha-D-glucose 6-phosphate pocket. The UDP-alpha-D-glucose site is built by Glu510, Trp512, and Gly513. A UDP-binding site is contributed by Thr515. The alpha-D-glucose 6-phosphate site is built by Arg582 and Arg586. Positions 634-737 (YRYPRPASVP…PTSSLGEERN (104 aa)) are disordered. Ser641 is modified (phosphoserine; by DYRK2, GSK3-alpha, GSK3-beta and PASK). Phosphoserine; by GSK3-alpha and GSK3-beta occurs at positions 645 and 649. A Phosphoserine modification is found at Ser652. At Ser653 the chain carries Phosphoserine; by GSK3-alpha and GSK3-beta. Ser657 is modified (phosphoserine; by CK2). Acidic residues predominate over residues 658-681 (EDEEDPRNGPLEEDGERYDEDEEA). Residues 682–695 (AKDRRNIRAPEWPR) show a composition bias toward basic and acidic residues. At Ser698 the chain carries Phosphoserine. Polar residues predominate over residues 698-714 (SCTSSTSGSKRNSVDTA). Phosphothreonine is present on Thr700. A Phosphoserine modification is found at Ser710. The segment covering 715–737 (TSSSLSTPSEPLSPTSSLGEERN) has biased composition (low complexity). Thr721 is modified (phosphothreonine). A phosphoserine mark is found at Ser727 and Ser731.

The protein belongs to the glycosyltransferase 3 family. In terms of assembly, part of the GYS1-GYG1 complex, a heterooctamer composed of a tetramer of GYS1 and 2 dimers of GYG1, where each GYS1 protomer binds to one GYG1 subunit (via GYG1 C-terminus); the GYS1 tetramer may dissociate from GYG1 dimers to continue glycogen polymerization on its own. Post-translationally, phosphorylation at Ser-8 by AMPK inactivates the enzyme activity. Primed phosphorylation at Ser-657 (site 5) by CSNK2A1 and CSNK2A2 is required for inhibitory phosphorylation at Ser-641 (site 3a), Ser-645 (site 3b), Ser-649 (site 3c) and Ser-653 (site 4) by GSK3A an GSK3B. Phosphorylated at Ser-641 by PASK, leading to inactivation; phosphorylation by PASK is inhibited by glycogen. Phosphorylated at Ser-641 by DYRK2, leading to inactivation. Dephosphorylation at Ser-641 and Ser-645 by PP1 activates the enzyme.

The enzyme catalyses [(1-&gt;4)-alpha-D-glucosyl](n) + UDP-alpha-D-glucose = [(1-&gt;4)-alpha-D-glucosyl](n+1) + UDP + H(+). It functions in the pathway glycan biosynthesis; glycogen biosynthesis. Its activity is regulated as follows. Allosteric activation by glucose-6-phosphate. Phosphorylation reduces the activity towards UDP-glucose. When in the non-phosphorylated state, glycogen synthase does not require glucose-6-phosphate as an allosteric activator; when phosphorylated it does. In terms of biological role, glycogen synthase participates in the glycogen biosynthetic process along with glycogenin and glycogen branching enzyme. Extends the primer composed of a few glucose units formed by glycogenin by adding new glucose units to it. In this context, glycogen synthase transfers the glycosyl residue from UDP-Glc to the non-reducing end of alpha-1,4-glucan. The protein is Glycogen [starch] synthase, muscle (GYS1) of Pongo abelii (Sumatran orangutan).